The sequence spans 158 residues: Glycine-rich RNA-binding protein 2, mitochondrial (158 aa).

Residues 1–34 (MAFCNKLGGLLRQNISSNGNVPVTSMLGSLRLMS) constitute a mitochondrion transit peptide. The RRM domain maps to 35–113 (TKLFIGGLSW…RHIRVNPAND (79 aa)). Phosphoserine is present on S43. The glycine-rich (GR) required for cell-to-cell movement stretch occupies residues 122 to 157 (GGGGGYSGGGGGYGGGGGGYGGGGGGYGGGGDGGGG).

This sequence belongs to the GR-RBP family. In terms of assembly, binds to small phloem-mobile single-stranded RNAs (ss-sRNA, e.g. small interfering RNA (siRNA) and microRNA (miRNA)) in the phloeme exudate, including viral-derived sRNA (vsiRNA). Interacts with ORRM2, RBG3/ORRM3 and RBG5/ORRM4.

It is found in the mitochondrion. Its subcellular location is the secreted. In terms of biological role, promotes the cis-splicing and editing of several mitochondrial RNAs (including NAD5 transcripts). Plays a role in RNA transcription or processing during stress. Binds RNAs and DNAs sequence with a preference to single-stranded nucleic acids. Displays strong affinity to poly(U) sequence. Exerts cold and freezing tolerance, probably by exhibiting an RNA chaperone activity during the cold and freezing adaptation process. Mediates cell-to-cell trafficking of RNA interference (RNAi) signals (small RNAs (sRNA), e.g. small interfering RNA (siRNA) and microRNA (miRNA)) which regulate growth and development, as well as responses to environmental inputs, including pathogen attack; can compromise zucchini yellow mosaic virus (ZYMV) and tobacco rattle virus (TRV) infections at the early stage. This Arabidopsis thaliana (Mouse-ear cress) protein is Glycine-rich RNA-binding protein 2, mitochondrial.